Reading from the N-terminus, the 254-residue chain is DNA repair protein RecO (254 aa).

Belongs to the RecO family.

Involved in DNA repair and RecF pathway recombination. This Gluconacetobacter diazotrophicus (strain ATCC 49037 / DSM 5601 / CCUG 37298 / CIP 103539 / LMG 7603 / PAl5) protein is DNA repair protein RecO.